The sequence spans 100 residues: Apolipoprotein C-II (100 aa).

The N-terminal stretch at 1-22 (MSSQFLLAFFLVLLVLGYEVQG) is a signal peptide. The interval 66 to 74 (SVDEKLRDM) is lipid binding. Residues 78-100 (SSAAMSTYAGIFTDQLFTLLKGE) are lipoprotein lipase cofactor.

It belongs to the apolipoprotein C2 family. Post-translationally, proapolipoprotein C-II is synthesized as a sialic acid containing glycoprotein which is subsequently desialylated prior to its proteolytic processing. In terms of processing, proapolipoprotein C-II, the major form found in plasma undergoes proteolytic cleavage of its N-terminal hexapeptide to generate the mature form apolipoprotein C-II, which occurs as the minor form in plasma.

The protein localises to the secreted. In terms of biological role, component of chylomicrons, very low-density lipoproteins (VLDL), low-density lipoproteins (LDL), and high-density lipoproteins (HDL) in plasma. Plays an important role in lipoprotein metabolism as an activator of lipoprotein lipase. This is Apolipoprotein C-II (APOC2) from Cricetulus griseus (Chinese hamster).